The primary structure comprises 1221 residues: A disintegrin and metalloproteinase with thrombospondin motifs 18 (1221 aa).

The first 47 residues, 1–47 (MECALLLACAFPAAGSGPPRGLAGLGRVAKALQLCCLCCASVAAALA), serve as a signal peptide directing secretion. A propeptide spanning residues 48–284 (SDSSSGASGL…EYGSSGRPRR (237 aa)) is cleaved from the precursor. Asparagine 151 and asparagine 190 each carry an N-linked (GlcNAc...) asparagine glycan. Positions 252–259 (HFCGRRKK) match the Cysteine switch motif. Cysteine 254 serves as a coordination point for Zn(2+). Residues 258 to 291 (KKYAPKPPTEDTYLRFDEYGSSGRPRRSAGKSQK) are disordered. The segment covering 265–275 (PTEDTYLRFDE) has biased composition (basic and acidic residues). A Peptidase M12B domain is found at 293–498 (LNVETLVVAD…PQAGCLVDEP (206 aa)). Asparagine 313 is a glycosylation site (N-linked (GlcNAc...) asparagine). 11 disulfide bridges follow: cysteine 369/cysteine 420, cysteine 395/cysteine 402, cysteine 414/cysteine 493, cysteine 453/cysteine 477, cysteine 521/cysteine 546, cysteine 532/cysteine 553, cysteine 541/cysteine 572, cysteine 566/cysteine 577, cysteine 601/cysteine 638, cysteine 605/cysteine 643, and cysteine 616/cysteine 628. Position 436 (histidine 436) interacts with Zn(2+). Residue glutamate 437 is part of the active site. Residues histidine 440 and histidine 446 each coordinate Zn(2+). In terms of domain architecture, Disintegrin spans 498–577 (PKQAGQYKYP…LSMWCRQGQC (80 aa)). The TSP type-1 1 domain maps to 589-644 (HGQWSAWSKWSECSRTCGGGVKFQERHCNNPKPQYGGLFCPGSSRIYQLCNINPCN). N-linked (GlcNAc...) asparagine glycosylation is found at asparagine 745, asparagine 838, and asparagine 909. The tract at residues 750 to 876 (FYKGLYLNQH…TPPATKRPAY (127 aa)) is spacer. 4 TSP type-1 domains span residues 931–990 (CPAY…NSHA), 991–1049 (CPPQ…GRCP), 1052–1116 (SRLQ…RACP), and 1123–1178 (MVAG…NFCP). Residues 1184 to 1221 (EDPSCVDFFNWCHLVPQHGVCNHKFYGKQCCKSCTRKI) enclose the PLAC domain.

It depends on Zn(2+) as a cofactor. The precursor is cleaved by a furin endopeptidase. Post-translationally, glycosylated. Can be O-fucosylated by POFUT2 on a serine or a threonine residue found within the consensus sequence C1-X(2)-(S/T)-C2-G of the TSP type-1 repeat domains where C1 and C2 are the first and second cysteine residue of the repeat, respectively. Fucosylated repeats can then be further glycosylated by the addition of a beta-1,3-glucose residue by the glucosyltransferase, B3GALTL. Fucosylation mediates the efficient secretion of ADAMTS family members. Can also be C-glycosylated with one or two mannose molecules on tryptophan residues within the consensus sequence W-X-X-W of the TPRs, and N-glycosylated. These other glycosylations can also facilitate secretion. In terms of tissue distribution, expressed in fetal lung, liver, and kidney and in adult brain, prostate, submaxillary gland, and endothelium.

The protein resides in the secreted. It localises to the extracellular space. Its subcellular location is the extracellular matrix. In Homo sapiens (Human), this protein is A disintegrin and metalloproteinase with thrombospondin motifs 18 (ADAMTS18).